The following is a 147-amino-acid chain: Protein YjdN (147 aa).

In Escherichia coli (strain K12), this protein is Protein YjdN (yjdN).